A 619-amino-acid polypeptide reads, in one-letter code: Chaperone protein HscA homolog (619 aa).

Belongs to the heat shock protein 70 family.

In terms of biological role, chaperone involved in the maturation of iron-sulfur cluster-containing proteins. Has a low intrinsic ATPase activity which is markedly stimulated by HscB. This Laribacter hongkongensis (strain HLHK9) protein is Chaperone protein HscA homolog.